A 436-amino-acid chain; its full sequence is Mannan endo-1,4-beta-mannosidase F (436 aa).

The first 18 residues, Met-1–Ala-18, serve as a signal peptide directing secretion. The CBM1 domain maps to Gln-19–Gln-54. Residues Ser-60–Pro-88 form a disordered region. The ser-rich linker stretch occupies residues Ser-79 to Gly-113. The catalytic stretch occupies residues Thr-114–Ile-436. Positions 146 and 260 each coordinate substrate. The active-site Proton donor is Glu-261. A substrate-binding site is contributed by Tyr-336. The active-site Nucleophile is Glu-370. Trp-400 serves as a coordination point for substrate.

The protein belongs to the glycosyl hydrolase 5 (cellulase A) family.

It is found in the secreted. It carries out the reaction Random hydrolysis of (1-&gt;4)-beta-D-mannosidic linkages in mannans, galactomannans and glucomannans.. Functionally, endo-1,4-mannanase, a crucial enzyme for depolymerization of seed galactomannans and wood galactoglucomannans. The chain is Mannan endo-1,4-beta-mannosidase F (manF) from Aspergillus clavatus (strain ATCC 1007 / CBS 513.65 / DSM 816 / NCTC 3887 / NRRL 1 / QM 1276 / 107).